The chain runs to 156 residues: Endoribonuclease YbeY (156 aa).

Zn(2+) contacts are provided by H117, H121, and H127.

It belongs to the endoribonuclease YbeY family. The cofactor is Zn(2+).

The protein localises to the cytoplasm. Its function is as follows. Single strand-specific metallo-endoribonuclease involved in late-stage 70S ribosome quality control and in maturation of the 3' terminus of the 16S rRNA. In Shewanella pealeana (strain ATCC 700345 / ANG-SQ1), this protein is Endoribonuclease YbeY.